Consider the following 905-residue polypeptide: MTQDQLLAGLKKDVRSLLVSSKHGLTPEHLRRDYQSMLGFPMPLRLLGFRNVLDMVKEMPEVVRLEYQLDGNIILKAIGDDTTKGIEELVSKQRDHKPKPNNRKGKPGYFNISYPRLQPVILPRRGQAKPALPAHLRSQLKQLLSHGPVRLSELESRYVAQFGKPLNVTQYGFFSISEMLSAAMDFIIMQQSRTGSQLLLRSAVTPQNQPENLMRRFSMQSTSPKQRLAGFSPKASSLPERRPEVSLDPSSVSKPEPVKEEQSFEETVFKLEEELRQQILEKGTAGTVSQELKEKLRKVVAENGNGISIHNLPTEYQRMHGEELPVSQCGFLSVTEMVGALSDTLAIQRGTDESESHWMVVEFKPIDTQPCEPELSPGDGTTSSPTGELQNPSSRAFYFSCPESAWEHEETEPLTDSQESDAELRVANKTIHQMVNLFPELMVSRVSAVPLDAVRCQKLKPPVHRKERELLPVLVEQTESPSYFYIRFSQNKEARALENMMIEMRSCYSYPDVAERYRLPDAYVRPGQVCCVAPRDMWFYRVVIHEVFSETEVKVYYVDYGDITKVERHSLRFLKACYADLPAQAVPAMLAGVRPITNIWPASAVSCFQRLCCERTLVAGVHSYQEDFLLLFLCDTNTEEDVYVHLALIQEGHAQPCSAAYGLVSEKFNPVTSYFGYDQLEDVKESLSPFSCSPDAEIDSQGNDSPSSCRTASNSESGETNLASIDVDPNLDLPPLEVINVPDVNTAAKSENVNPFEALVRKDPLFNSEWDQGWTAEDKTDETKFELDVSTEQSKPETVYTPSPVQAAVGKQQLCASPVEPKVNATTCVNPHNPVPIQINCSYPVLPGVPVYPVKPPISQFMMQLLGNPVYQGPGPNTAFQHLTSPLALRPAARMSAGGQILHWS.

HTH OST-type domains follow at residues 6–79 and 128–204; these read LLAG…KAIG and AKPA…RSAV. The interval 219–264 is disordered; it reads MQSTSPKQRLAGFSPKASSLPERRPEVSLDPSSVSKPEPVKEEQSF. The HTH OST-type 3 domain maps to 288-364; it reads VSQELKEKLR…ESHWMVVEFK (77 aa). Residues 368-393 are disordered; it reads TQPCEPELSPGDGTTSSPTGELQNPS. Over residues 379–393 the composition is skewed to polar residues; that stretch reads DGTTSSPTGELQNPS. Positions 523–581 constitute a Tudor domain; it reads YVRPGQVCCVAPRDMWFYRVVIHEVFSETEVKVYYVDYGDITKVERHSLRFLKACYADL. The segment at 694–728 is disordered; that stretch reads PDAEIDSQGNDSPSSCRTASNSESGETNLASIDVD. A compositionally biased stretch (polar residues) spans 700–723; sequence SQGNDSPSSCRTASNSESGETNLA.

Belongs to the TDRD5 family.

Its subcellular location is the cytoplasm. Required during spermiogenesis to participate in the repression transposable elements and prevent their mobilization, which is essential for the germline integrity. Probably acts via the piRNA metabolic process, which mediates the repression of transposable elements during meiosis by forming complexes composed of piRNAs and Piwi proteins and govern the methylation and subsequent repression of transposons. This Danio rerio (Zebrafish) protein is Tudor domain-containing protein 5 (tdrd5).